The chain runs to 84 residues: Small ribosomal subunit protein bS20 (84 aa).

The segment at 1–25 is disordered; that stretch reads MANIVSNEKTYRHTQKVRKENHAKM.

The protein belongs to the bacterial ribosomal protein bS20 family.

Binds directly to 16S ribosomal RNA. The polypeptide is Small ribosomal subunit protein bS20 (Ureaplasma urealyticum serovar 10 (strain ATCC 33699 / Western)).